Reading from the N-terminus, the 469-residue chain is 3-isopropylmalate dehydratase large subunit (469 aa).

Residues Cys347, Cys410, and Cys413 each contribute to the [4Fe-4S] cluster site.

The protein belongs to the aconitase/IPM isomerase family. LeuC type 1 subfamily. As to quaternary structure, heterodimer of LeuC and LeuD. The cofactor is [4Fe-4S] cluster.

The catalysed reaction is (2R,3S)-3-isopropylmalate = (2S)-2-isopropylmalate. It functions in the pathway amino-acid biosynthesis; L-leucine biosynthesis; L-leucine from 3-methyl-2-oxobutanoate: step 2/4. Catalyzes the isomerization between 2-isopropylmalate and 3-isopropylmalate, via the formation of 2-isopropylmaleate. The polypeptide is 3-isopropylmalate dehydratase large subunit (Burkholderia vietnamiensis (strain G4 / LMG 22486) (Burkholderia cepacia (strain R1808))).